The chain runs to 305 residues: tRNA dimethylallyltransferase (305 aa).

8–15 (GPTAVGKT) is a binding site for ATP. 10 to 15 (TAVGKT) contributes to the substrate binding site. Residues 33–36 (DSRQ) form an interaction with substrate tRNA region.

Belongs to the IPP transferase family. In terms of assembly, monomer. Mg(2+) is required as a cofactor.

The enzyme catalyses adenosine(37) in tRNA + dimethylallyl diphosphate = N(6)-dimethylallyladenosine(37) in tRNA + diphosphate. In terms of biological role, catalyzes the transfer of a dimethylallyl group onto the adenine at position 37 in tRNAs that read codons beginning with uridine, leading to the formation of N6-(dimethylallyl)adenosine (i(6)A). The polypeptide is tRNA dimethylallyltransferase (Thermotoga petrophila (strain ATCC BAA-488 / DSM 13995 / JCM 10881 / RKU-1)).